A 308-amino-acid chain; its full sequence is Ribosomal RNA small subunit methyltransferase A (308 aa).

Residues N35, V37, G62, E83, D113, and N136 each coordinate S-adenosyl-L-methionine.

It belongs to the class I-like SAM-binding methyltransferase superfamily. rRNA adenine N(6)-methyltransferase family. RsmA subfamily.

It is found in the cytoplasm. It carries out the reaction adenosine(1518)/adenosine(1519) in 16S rRNA + 4 S-adenosyl-L-methionine = N(6)-dimethyladenosine(1518)/N(6)-dimethyladenosine(1519) in 16S rRNA + 4 S-adenosyl-L-homocysteine + 4 H(+). Functionally, specifically dimethylates two adjacent adenosines (A1518 and A1519) in the loop of a conserved hairpin near the 3'-end of 16S rRNA in the 30S particle. May play a critical role in biogenesis of 30S subunits. This is Ribosomal RNA small subunit methyltransferase A from Bifidobacterium longum (strain NCC 2705).